A 330-amino-acid polypeptide reads, in one-letter code: 2-alkyl-3-oxoalkanoate reductase (330 aa).

Tyr139 acts as the Proton acceptor in catalysis. Position 143 (Lys143) interacts with NADP(+).

The protein belongs to the 3-beta-HSD family. As to quaternary structure, homodimer.

It carries out the reaction a (2R,3S)-2-alkyl-3-hydroxyalkanoate + NADP(+) = an (R)-2-alkyl-3-oxoalkanoate + NADPH + H(+). Functionally, involved in olefin biosynthesis. Catalyzes the reversible stereospecific NADPH-dependent reduction of 2-alkyl-3-oxoalkanoic acids to 2-alkyl-3-hydroxyalkanoic acids. In the oxidative direction, syn-2-decyl-3-hydroxytetradecanoic acid is the preferred substrate. In the reductive direction, (2R/S)-2-hexyl-3-ketodecanoic acid is accepted as substrate. This chain is 2-alkyl-3-oxoalkanoate reductase, found in Stenotrophomonas maltophilia (strain K279a).